Reading from the N-terminus, the 262-residue chain is Acyl-[acyl-carrier-protein]--UDP-N-acetylglucosamine O-acyltransferase (262 aa).

The protein belongs to the transferase hexapeptide repeat family. LpxA subfamily. Homotrimer.

The protein resides in the cytoplasm. The catalysed reaction is a (3R)-hydroxyacyl-[ACP] + UDP-N-acetyl-alpha-D-glucosamine = a UDP-3-O-[(3R)-3-hydroxyacyl]-N-acetyl-alpha-D-glucosamine + holo-[ACP]. It participates in glycolipid biosynthesis; lipid IV(A) biosynthesis; lipid IV(A) from (3R)-3-hydroxytetradecanoyl-[acyl-carrier-protein] and UDP-N-acetyl-alpha-D-glucosamine: step 1/6. Functionally, involved in the biosynthesis of lipid A, a phosphorylated glycolipid that anchors the lipopolysaccharide to the outer membrane of the cell. The polypeptide is Acyl-[acyl-carrier-protein]--UDP-N-acetylglucosamine O-acyltransferase (Blochmanniella floridana).